Reading from the N-terminus, the 529-residue chain is Bifunctional purine biosynthesis protein PurH (529 aa).

The MGS-like domain occupies 1-148; sequence MQQRRPVRRA…KNHKDVAIVV (148 aa).

This sequence belongs to the PurH family.

The catalysed reaction is (6R)-10-formyltetrahydrofolate + 5-amino-1-(5-phospho-beta-D-ribosyl)imidazole-4-carboxamide = 5-formamido-1-(5-phospho-D-ribosyl)imidazole-4-carboxamide + (6S)-5,6,7,8-tetrahydrofolate. The enzyme catalyses IMP + H2O = 5-formamido-1-(5-phospho-D-ribosyl)imidazole-4-carboxamide. It functions in the pathway purine metabolism; IMP biosynthesis via de novo pathway; 5-formamido-1-(5-phospho-D-ribosyl)imidazole-4-carboxamide from 5-amino-1-(5-phospho-D-ribosyl)imidazole-4-carboxamide (10-formyl THF route): step 1/1. The protein operates within purine metabolism; IMP biosynthesis via de novo pathway; IMP from 5-formamido-1-(5-phospho-D-ribosyl)imidazole-4-carboxamide: step 1/1. This is Bifunctional purine biosynthesis protein PurH from Citrobacter koseri (strain ATCC BAA-895 / CDC 4225-83 / SGSC4696).